A 242-amino-acid chain; its full sequence is Small ribosomal subunit protein uS2 (242 aa).

This sequence belongs to the universal ribosomal protein uS2 family.

This chain is Small ribosomal subunit protein uS2, found in Idiomarina loihiensis (strain ATCC BAA-735 / DSM 15497 / L2-TR).